A 101-amino-acid chain; its full sequence is Small ribosomal subunit protein uS14 (101 aa).

Over residues 1–10 (MAKKSSIEKN) the composition is skewed to basic and acidic residues. Positions 1-23 (MAKKSSIEKNNRRKKMTKNAAPK) are disordered. Over residues 11–23 (NRRKKMTKNAAPK) the composition is skewed to basic residues.

Belongs to the universal ribosomal protein uS14 family. In terms of assembly, part of the 30S ribosomal subunit. Contacts proteins S3 and S10.

In terms of biological role, binds 16S rRNA, required for the assembly of 30S particles and may also be responsible for determining the conformation of the 16S rRNA at the A site. The protein is Small ribosomal subunit protein uS14 of Rhodopseudomonas palustris (strain HaA2).